The chain runs to 365 residues: MLVKPSIISGLVRLTSHSPSSSSSVLRRQEFLVRTLCGSPIIRAMSSTSEADAESVLRTVTPSLDLKRHKGQAGKIAVIGGCREYTGAPYFAAISALKIGADLSHVFCTKDAAPVIKSYSPELIVHPVLEESYSISQLSEEDKREVQDKVLGEVGKWMERFDCLVIGPGLGRDPFLLECVSIIMLLAKKSNVPFVIDGDGLFLVTNSIDLVHSYPLAVLTPNVNEYKRLVQKVLNCEVDEQNAEDQLRSLAKQIGGVTILRKGKSDLISNGETVKSVSIYGSPRRCGGQGDILSGGVAVFLSWAQQLKSDPESPSENPAILGCIAASGLLRKAASLAFTKHKRSTLTSDIIECLGESLEDICPAS.

The N-terminal 43 residues, 1 to 43 (MLVKPSIISGLVRLTSHSPSSSSSVLRRQEFLVRTLCGSPIIR), are a transit peptide targeting the chloroplast. An N-acetylserine modification is found at leucine 2. The region spanning 53 to 361 (AESVLRTVTP…ECLGESLEDI (309 aa)) is the YjeF C-terminal domain. Residues glycine 169 and 222-228 (NVNEYKR) contribute to the (6S)-NADPHX site. Residues 262 to 266 (KGKSD) and 281 to 290 (GSPRRCGGQG) contribute to the ATP site. Aspartate 291 lines the (6S)-NADPHX pocket.

It belongs to the NnrD/CARKD family. Mg(2+) is required as a cofactor.

The protein localises to the plastid. It is found in the chloroplast. Its subcellular location is the cytoplasm. It carries out the reaction (6S)-NADHX + ATP = ADP + phosphate + NADH + H(+). The catalysed reaction is (6S)-NADPHX + ATP = ADP + phosphate + NADPH + H(+). In terms of biological role, catalyzes the dehydration of the S-form of NAD(P)HX at the expense of ATP, which is converted to ADP. Together with NAD(P)HX epimerase, which catalyzes the epimerization of the S- and R-forms, the enzyme allows the repair of both epimers of NAD(P)HX, a damaged form of NAD(P)H that is a result of enzymatic or heat-dependent hydration. This is ATP-dependent (S)-NAD(P)H-hydrate dehydratase from Arabidopsis thaliana (Mouse-ear cress).